A 187-amino-acid chain; its full sequence is Cytochrome b-245 chaperone 1 (187 aa).

The helical transmembrane segment at 20–42 (GIRSWSLLVGILSTGLAAAYYSG) threads the bilayer. A disordered region spans residues 167 to 187 (ESPSERSQSSDSEPDGPGGQS). Residues serine 168 and serine 170 each carry the phosphoserine modification.

The protein belongs to the CYBC1 family. In terms of assembly, interacts with CYBB; CYBC1 may act as a chaperone stabilizing Cytochrome b-245 heterodimer.

It localises to the endoplasmic reticulum membrane. In terms of biological role, functions as a chaperone necessary for a stable expression of the CYBA and CYBB subunits of the cytochrome b-245 heterodimer. Controls the phagocyte respiratory burst and is essential for innate immunity. In Rattus norvegicus (Rat), this protein is Cytochrome b-245 chaperone 1.